We begin with the raw amino-acid sequence, 442 residues long: UDP-glucosyltransferase 29 (442 aa).

The Proton acceptor role is filled by His-20. An an anthocyanidin-binding site is contributed by His-20. Asp-116 functions as the Charge relay in the catalytic mechanism. Thr-138, Ala-318, Gln-320, His-335, Trp-338, Ser-340, Glu-343, Asp-359, and Gln-360 together coordinate UDP-alpha-D-glucose.

This sequence belongs to the UDP-glycosyltransferase family. As to expression, expressed at higher levels in roots than in leaves.

It carries out the reaction (20S)-ginsenoside F2 + UDP-alpha-D-glucose = (20S)-ginsenoside Rd + UDP + H(+). The enzyme catalyses (20S)-ginsenoside Rh2 + UDP-alpha-D-glucose = (20S)-ginsenoside Rg3 + UDP + H(+). The protein operates within secondary metabolite biosynthesis; terpenoid biosynthesis. In terms of biological role, component of the dammarane-type triterpene saponins (e.g. PPD-type ginsenosides or panaxosides) biosynthetic pathway. Glycosyltransferase that catalyzes the conversion of ginsenoside Rh2 to ginsenoside Rg3. Triggers the biosynthesis of ginsenoside Rd from ginsenoside F2. This is UDP-glucosyltransferase 29 from Panax ginseng (Korean ginseng).